A 448-amino-acid polypeptide reads, in one-letter code: Senescence/dehydration-associated protein At4g35985, chloroplastic (448 aa).

The tract at residues 1–36 (MECSATPPKLYPTVDTSTTVAPLPKSSSSSSSTNNN) is disordered. The N-terminal 56 residues, 1-56 (MECSATPPKLYPTVDTSTTVAPLPKSSSSSSSTNNNNLYPSINVNDLVNNIFPDPT), are a transit peptide targeting the chloroplast. A compositionally biased stretch (low complexity) spans 26–36 (SSSSSSSTNNN). The 169-residue stretch at 248–416 (IAAGSGQLIK…AWTVFKIRQA (169 aa)) folds into the Senescence domain. The tract at residues 422 to 448 (AMKPSSLAKTVVKTAAKERKKGKKSSK) is disordered. A compositionally biased stretch (basic residues) spans 439–448 (ERKKGKKSSK).

Expressed in leaves (especially in midribs and trichomes), apical meristemic regions, stems, roots and flowers.

The protein resides in the plastid. Its subcellular location is the chloroplast. The sequence is that of Senescence/dehydration-associated protein At4g35985, chloroplastic from Arabidopsis thaliana (Mouse-ear cress).